The following is a 446-amino-acid chain: Sensor protein PfeS (446 aa).

Over 1–9 (MRRHPLLWK) the chain is Cytoplasmic. The helical transmembrane segment at 10-30 (LALLQVGFCLLLTWLIYTWGL) threads the bilayer. At 31-155 (SVERSTYFLA…LLPGGLTPWT (125 aa)) the chain is on the periplasmic side. Residues 156 to 176 (HLVTHGIVPTLLAALLGLLLY) form a helical membrane-spanning segment. Positions 177–233 (RHLVVPLNRLRDRADALRADELESTPLAAPLAARRDELGELAQALEHMAERLRLSLA) constitute an HAMP domain. Topologically, residues 177–446 (RHLVVPLNRL…CLHLWLPAAA (270 aa)) are cytoplasmic. Residues 241-446 (TLSHELRTPL…CLHLWLPAAA (206 aa)) enclose the Histidine kinase domain. The residue at position 244 (histidine 244) is a Phosphohistidine; by autocatalysis.

The protein localises to the cell inner membrane. The enzyme catalyses ATP + protein L-histidine = ADP + protein N-phospho-L-histidine.. Member of the two-component regulatory system PfeR/PfeS. May activate PfeR by phosphorylation. The sequence is that of Sensor protein PfeS (pfeS) from Pseudomonas aeruginosa (strain ATCC 15692 / DSM 22644 / CIP 104116 / JCM 14847 / LMG 12228 / 1C / PRS 101 / PAO1).